Here is a 325-residue protein sequence, read N- to C-terminus: 5-dehydro-2-deoxygluconokinase (325 aa).

Belongs to the carbohydrate kinase PfkB family.

The enzyme catalyses 5-dehydro-2-deoxy-D-gluconate + ATP = 6-phospho-5-dehydro-2-deoxy-D-gluconate + ADP + H(+). It participates in polyol metabolism; myo-inositol degradation into acetyl-CoA; acetyl-CoA from myo-inositol: step 5/7. In terms of biological role, catalyzes the phosphorylation of 5-dehydro-2-deoxy-D-gluconate (2-deoxy-5-keto-D-gluconate or DKG) to 6-phospho-5-dehydro-2-deoxy-D-gluconate (DKGP). In Listeria monocytogenes serotype 4b (strain CLIP80459), this protein is 5-dehydro-2-deoxygluconokinase.